Reading from the N-terminus, the 333-residue chain is Anthranilate phosphoribosyltransferase (333 aa).

5-phospho-alpha-D-ribose 1-diphosphate contacts are provided by residues Gly80, 83-84 (GD), Ser88, 90-93 (NIST), 108-116 (KHGNRSVSS), and Ser120. Gly80 is a binding site for anthranilate. Ser92 contacts Mg(2+). Asn111 contacts anthranilate. Position 166 (Arg166) interacts with anthranilate. Residues Asp224 and Glu225 each coordinate Mg(2+).

This sequence belongs to the anthranilate phosphoribosyltransferase family. As to quaternary structure, homodimer. Mg(2+) is required as a cofactor.

It carries out the reaction N-(5-phospho-beta-D-ribosyl)anthranilate + diphosphate = 5-phospho-alpha-D-ribose 1-diphosphate + anthranilate. Its pathway is amino-acid biosynthesis; L-tryptophan biosynthesis; L-tryptophan from chorismate: step 2/5. In terms of biological role, catalyzes the transfer of the phosphoribosyl group of 5-phosphorylribose-1-pyrophosphate (PRPP) to anthranilate to yield N-(5'-phosphoribosyl)-anthranilate (PRA). The protein is Anthranilate phosphoribosyltransferase of Yersinia pseudotuberculosis serotype O:1b (strain IP 31758).